Consider the following 189-residue polypeptide: Thymidine kinase (189 aa).

ATP is bound by residues 9–16 and 85–88; these read GTMNSGKT and DECQ. The Proton acceptor role is filled by E86. Zn(2+)-binding residues include C143, C146, C180, and H183.

Belongs to the thymidine kinase family. Homotetramer.

The protein localises to the cytoplasm. It catalyses the reaction thymidine + ATP = dTMP + ADP + H(+). The polypeptide is Thymidine kinase (Streptococcus agalactiae serotype Ia (strain ATCC 27591 / A909 / CDC SS700)).